The sequence spans 535 residues: Beta-glucosidase 20 (535 aa).

A signal peptide spans 1–24; it reads MGRFHKFPLLGLVLFLGLTGSLIA. Gln56 and His159 together coordinate a beta-D-glucoside. A glycan (N-linked (GlcNAc...) asparagine) is linked at Asn187. 204-205 lines the a beta-D-glucoside pocket; it reads NE. Glu205 serves as the catalytic Proton donor. An intrachain disulfide couples Cys224 to Cys235. Tyr351 and Glu424 together coordinate a beta-D-glucoside. Catalysis depends on Glu424, which acts as the Nucleophile. Asn468 carries an N-linked (GlcNAc...) asparagine glycan. Residues Trp475, 482–483, and Phe491 contribute to the a beta-D-glucoside site; that span reads EW. Asn501 carries N-linked (GlcNAc...) asparagine glycosylation. The Prevents secretion from ER signature appears at 532–535; it reads HDEL.

The protein belongs to the glycosyl hydrolase 1 family.

It is found in the endoplasmic reticulum lumen. The enzyme catalyses Hydrolysis of terminal, non-reducing beta-D-glucosyl residues with release of beta-D-glucose.. In Arabidopsis thaliana (Mouse-ear cress), this protein is Beta-glucosidase 20.